The sequence spans 72 residues: Small, acid-soluble spore protein C (72 aa).

The protein belongs to the alpha/beta-type SASP family.

SASP are bound to spore DNA. They are double-stranded DNA-binding proteins that cause DNA to change to an a-like conformation. They protect the DNA backbone from chemical and enzymatic cleavage and are thus involved in dormant spore's high resistance to UV light. The protein is Small, acid-soluble spore protein C (sspC) of Bacillus subtilis (strain 168).